Consider the following 327-residue polypeptide: Zinc transport protein ZntB (327 aa).

At 1–273 (MEAIKGADVN…ARRTYTMSLM (273 aa)) the chain is on the cytoplasmic side. Residues 274–294 (AMVFLPSTFLTGLFGVNLGGI) traverse the membrane as a helical segment. Residues 295–300 (PGGGWR) are Periplasmic-facing. A helical transmembrane segment spans residues 301 to 321 (FGFSLFCILLVVLIGGVALWL). The Cytoplasmic portion of the chain corresponds to 322–327 (HRSKWL).

The protein belongs to the CorA metal ion transporter (MIT) (TC 1.A.35) family.

It localises to the cell inner membrane. It catalyses the reaction Zn(2+)(out) + H(+)(out) = Zn(2+)(in) + H(+)(in). Zinc transporter. Acts as a Zn(2+):proton symporter, which likely mediates zinc ion uptake. The polypeptide is Zinc transport protein ZntB (Escherichia fergusonii (strain ATCC 35469 / DSM 13698 / CCUG 18766 / IAM 14443 / JCM 21226 / LMG 7866 / NBRC 102419 / NCTC 12128 / CDC 0568-73)).